Reading from the N-terminus, the 194-residue chain is MSSSSEPTKFKMVVVGAGGVGKSALTIQLIQNHFVEDYDPTIEDSYIKQVVVDGAICILDILDTAGQEEYSAMREHYMRTGEGFLCIFAVTSLKSFQEIDNFRTQALRVKDADKVPMVLVGNKVDLPKRDVSTKDGNDKALSFGIPYVETSAKTKQGVEEAFFTLVREILADRRNQEGQKKSDSKRAKFKCTLL.

Gly-16–Ser-23 is a binding site for GTP. The short motif at Tyr-38–Tyr-46 is the Effector region element. GTP is bound by residues Asp-63–Gln-67 and Asn-122–Asp-125. Cysteine methyl ester is present on Cys-191. Cys-191 carries the S-geranylgeranyl cysteine lipid modification. A propeptide spans Thr-192–Leu-194 (removed in mature form).

It belongs to the small GTPase superfamily. Ras family.

Its subcellular location is the cell membrane. It carries out the reaction GTP + H2O = GDP + phosphate + H(+). Its activity is regulated as follows. Alternates between an inactive form bound to GDP and an active form bound to GTP. Activated by a guanine nucleotide-exchange factor (GEF) and inactivated by a GTPase-activating protein (GAP). Functionally, ras proteins bind GDP/GTP and possess intrinsic GTPase activity. The sequence is that of Ras-like protein RAS1 (RAS1) from Hydra vulgaris (Hydra).